The following is a 376-amino-acid chain: Ribosomal RNA large subunit methyltransferase G (376 aa).

This sequence belongs to the methyltransferase superfamily. RlmG family.

The protein localises to the cytoplasm. It carries out the reaction guanosine(1835) in 23S rRNA + S-adenosyl-L-methionine = N(2)-methylguanosine(1835) in 23S rRNA + S-adenosyl-L-homocysteine + H(+). Its function is as follows. Specifically methylates the guanine in position 1835 (m2G1835) of 23S rRNA. The protein is Ribosomal RNA large subunit methyltransferase G of Cronobacter sakazakii (strain ATCC BAA-894) (Enterobacter sakazakii).